The chain runs to 389 residues: MTKKILLLGSGELGKEFVIAAKRKGQYVIACDSYAGAPAMQVADEFEVFSMLDGDALDAVVAKHKPDIIVPEIEAIRTERLYHLEQEGIQVVPSARAVNFTMNRKAIRDLAAKELGLKTAKYFYAKSLEELQEAAKEIGFPCVVKPLMSSSGKGQSLVKSADELEQAWHYGCEGSRGDIKELIIEEFIQFDSEITLLTVTQKNGPTLFCPPIGHVQKGGDYRESFQPAHIDPEHLKEAQRMADKVTAALTGAGIWGVEFFLSHENGVYFSELSPRPHDTGMVTLAGTQNLNEFELHLRAVLGLPIPEITQERIGASAVILSPIASKEAPRYRGEEEVCKETNTYLRIFGKPYTKLNRRMGVVVCYAPNGSDLDALRDKCKAAAAKVEVY.

N(1)-(5-phospho-beta-D-ribosyl)glycinamide is bound by residues 12-13 (EL) and glutamate 72. Residues arginine 104, lysine 145, 150-155 (SSGKGQ), 185-188 (EEFI), and glutamate 193 each bind ATP. The ATP-grasp domain occupies 109 to 301 (DLAAKELGLK…EFELHLRAVL (193 aa)). Positions 258 and 271 each coordinate Mg(2+). Residues aspartate 278, lysine 350, and 357–358 (RR) each bind N(1)-(5-phospho-beta-D-ribosyl)glycinamide.

The protein belongs to the PurK/PurT family. As to quaternary structure, homodimer.

It catalyses the reaction N(1)-(5-phospho-beta-D-ribosyl)glycinamide + formate + ATP = N(2)-formyl-N(1)-(5-phospho-beta-D-ribosyl)glycinamide + ADP + phosphate + H(+). It functions in the pathway purine metabolism; IMP biosynthesis via de novo pathway; N(2)-formyl-N(1)-(5-phospho-D-ribosyl)glycinamide from N(1)-(5-phospho-D-ribosyl)glycinamide (formate route): step 1/1. In terms of biological role, involved in the de novo purine biosynthesis. Catalyzes the transfer of formate to 5-phospho-ribosyl-glycinamide (GAR), producing 5-phospho-ribosyl-N-formylglycinamide (FGAR). Formate is provided by PurU via hydrolysis of 10-formyl-tetrahydrofolate. The chain is Formate-dependent phosphoribosylglycinamide formyltransferase from Phocaeicola vulgatus (strain ATCC 8482 / DSM 1447 / JCM 5826 / CCUG 4940 / NBRC 14291 / NCTC 11154) (Bacteroides vulgatus).